Consider the following 55-residue polypeptide: MAKPATIKIRLNSTADTGFFYVTKKNPRTMTEKMVQRKYDPVAKKHVEFKEGKIK.

It belongs to the bacterial ribosomal protein bL33 family.

The sequence is that of Large ribosomal subunit protein bL33 from Hyphomonas neptunium (strain ATCC 15444).